A 212-amino-acid chain; its full sequence is ATP-dependent Clp protease proteolytic subunit (212 aa).

The active-site Nucleophile is the serine 112. Histidine 137 is an active-site residue.

This sequence belongs to the peptidase S14 family. In terms of assembly, fourteen ClpP subunits assemble into 2 heptameric rings which stack back to back to give a disk-like structure with a central cavity, resembling the structure of eukaryotic proteasomes.

The protein resides in the cytoplasm. It catalyses the reaction Hydrolysis of proteins to small peptides in the presence of ATP and magnesium. alpha-casein is the usual test substrate. In the absence of ATP, only oligopeptides shorter than five residues are hydrolyzed (such as succinyl-Leu-Tyr-|-NHMec, and Leu-Tyr-Leu-|-Tyr-Trp, in which cleavage of the -Tyr-|-Leu- and -Tyr-|-Trp bonds also occurs).. Cleaves peptides in various proteins in a process that requires ATP hydrolysis. Has a chymotrypsin-like activity. Plays a major role in the degradation of misfolded proteins. The chain is ATP-dependent Clp protease proteolytic subunit from Thiobacillus denitrificans (strain ATCC 25259 / T1).